A 32-amino-acid polypeptide reads, in one-letter code: Cytochrome b6-f complex subunit 7 (32 aa).

The chain crosses the membrane as a helical span at residues 9-27 (AAVFWVLIPVGLAGGALLL).

This sequence belongs to the PetM family. As to quaternary structure, the 4 large subunits of the cytochrome b6-f complex are cytochrome b6, subunit IV (17 kDa polypeptide, PetD), cytochrome f and the Rieske protein, while the 4 small subunits are PetG, PetL, PetM and PetN. The complex functions as a dimer.

The protein localises to the cellular thylakoid membrane. Functionally, component of the cytochrome b6-f complex, which mediates electron transfer between photosystem II (PSII) and photosystem I (PSI), cyclic electron flow around PSI, and state transitions. In Prochlorococcus marinus (strain MIT 9303), this protein is Cytochrome b6-f complex subunit 7.